The following is a 236-amino-acid chain: Potassium/proton antiporter CemA (236 aa).

4 helical membrane passes run 18–38, 114–134, 161–181, and 196–216; these read YIIS…FLVL, IAHV…LINA, LILF…KILI, and FIFL…KYWI.

Belongs to the CemA family.

The protein resides in the plastid. It is found in the chloroplast inner membrane. It carries out the reaction K(+)(in) + H(+)(out) = K(+)(out) + H(+)(in). Its function is as follows. Contributes to K(+)/H(+) antiport activity by supporting proton efflux to control proton extrusion and homeostasis in chloroplasts in a light-dependent manner to modulate photosynthesis. Prevents excessive induction of non-photochemical quenching (NPQ) under continuous-light conditions. Indirectly promotes efficient inorganic carbon uptake into chloroplasts. The chain is Potassium/proton antiporter CemA from Mesostigma viride (Green alga).